The primary structure comprises 249 residues: Vitamin B12 import ATP-binding protein BtuD (249 aa).

One can recognise an ABC transporter domain in the interval 5-233 (MQLQDVAETT…PNLAQAYGMN (229 aa)). 33-40 (GPNGAGKS) contributes to the ATP binding site.

The protein belongs to the ABC transporter superfamily. Vitamin B12 importer (TC 3.A.1.13.1) family. As to quaternary structure, the complex is composed of two ATP-binding proteins (BtuD), two transmembrane proteins (BtuC) and a solute-binding protein (BtuF).

It is found in the cell inner membrane. It catalyses the reaction an R-cob(III)alamin(out) + ATP + H2O = an R-cob(III)alamin(in) + ADP + phosphate + H(+). Functionally, part of the ABC transporter complex BtuCDF involved in vitamin B12 import. Responsible for energy coupling to the transport system. The polypeptide is Vitamin B12 import ATP-binding protein BtuD (Citrobacter koseri (strain ATCC BAA-895 / CDC 4225-83 / SGSC4696)).